We begin with the raw amino-acid sequence, 604 residues long: Kelch-like protein 15 (604 aa).

Residues 31-98 form the BTB domain; it reads LDVTLVIEDH…MYYGTIELSM (68 aa). One can recognise a BACK domain in the interval 133–237; it reads CAEIMRLLDD…TPTSVFEKVK (105 aa). 5 Kelch repeats span residues 328 to 379, 381 to 426, 428 to 473, 489 to 542, and 544 to 590; these read FVFL…VIGK, IYAV…VLNN, LFIT…NKSK, KLYV…VLDK, and IMVL…VCNL.

In terms of assembly, homodimer. Dimerization does not affect PPP2R5B-binding, but is required for its proteasomal degradation. Interacts with CUL3. Directly interacts with PPP2R5B; this interaction leads to PPP2R5B proteasomal degradation. Interacts with RBBP8/CtIP; this interaction leads to RBBP8 proteasomal degradation. Interacts with PACMP micropeptide; interaction prevents ubiquitination and degradation of RBBP8/CtIP.

Its subcellular location is the nucleus. It functions in the pathway protein modification; protein ubiquitination. Its function is as follows. Substrate-specific adapter for CUL3 E3 ubiquitin-protein ligase complex. Acts as an adapter for CUL3 to target the serine/threonine-protein phosphatase 2A (PP2A) subunit PPP2R5B for ubiquitination and subsequent proteasomal degradation, thus promoting exchange with other regulatory subunits. Acts as an adapter for CUL3 to target the DNA-end resection factor RBBP8/CtIP for ubiquitination and subsequent proteasomal degradation. Through the regulation of RBBP8/CtIP protein turnover, plays a key role in DNA damage response, favoring DNA double-strand repair through error-prone non-homologous end joining (NHEJ) over error-free, RBBP8-mediated homologous recombination (HR). The protein is Kelch-like protein 15 (KLHL15) of Homo sapiens (Human).